The chain runs to 181 residues: Shikimate kinase 2 (181 aa).

Residue 12-17 (GCGKTT) participates in ATP binding. Residues T16 and D32 each coordinate Mg(2+). Residues D34, R58, and G79 each contribute to the substrate site. The segment at 112-126 (EAEPEADLRPTLTGK) is LID domain. Residue R120 participates in ATP binding. Residue R139 coordinates substrate.

The protein belongs to the shikimate kinase family. AroL subfamily. As to quaternary structure, monomer. The cofactor is Mg(2+).

It is found in the cytoplasm. The enzyme catalyses shikimate + ATP = 3-phosphoshikimate + ADP + H(+). It participates in metabolic intermediate biosynthesis; chorismate biosynthesis; chorismate from D-erythrose 4-phosphate and phosphoenolpyruvate: step 5/7. In terms of biological role, catalyzes the specific phosphorylation of the 3-hydroxyl group of shikimic acid using ATP as a cosubstrate. This chain is Shikimate kinase 2, found in Salmonella enteritidis PT4 (strain P125109).